We begin with the raw amino-acid sequence, 42 residues long: Gastric inhibitory polypeptide (42 aa).

This sequence belongs to the glucagon family.

Its subcellular location is the secreted. Functionally, potent stimulator of insulin secretion and relatively poor inhibitor of gastric acid secretion. The polypeptide is Gastric inhibitory polypeptide (GIP) (Sus scrofa (Pig)).